The chain runs to 252 residues: Methylthioribulose-1-phosphate dehydratase (252 aa).

C105 is a binding site for substrate. Positions 123 and 125 each coordinate Zn(2+). The active-site Proton donor/acceptor is the E151. H208 contacts Zn(2+).

Belongs to the aldolase class II family. MtnB subfamily. It depends on Zn(2+) as a cofactor.

It localises to the cytoplasm. The enzyme catalyses 5-(methylsulfanyl)-D-ribulose 1-phosphate = 5-methylsulfanyl-2,3-dioxopentyl phosphate + H2O. It participates in amino-acid biosynthesis; L-methionine biosynthesis via salvage pathway; L-methionine from S-methyl-5-thio-alpha-D-ribose 1-phosphate: step 2/6. In terms of biological role, catalyzes the dehydration of methylthioribulose-1-phosphate (MTRu-1-P) into 2,3-diketo-5-methylthiopentyl-1-phosphate (DK-MTP-1-P). The polypeptide is Methylthioribulose-1-phosphate dehydratase (Sclerotinia sclerotiorum (strain ATCC 18683 / 1980 / Ss-1) (White mold)).